A 312-amino-acid polypeptide reads, in one-letter code: D-alanine--D-alanine ligase (312 aa).

In terms of domain architecture, ATP-grasp spans 99–304 (KKILKAEGIP…FEDLVEKILM (206 aa)). Residue 131-186 (LQTLKLPVVIKAPREGSTIGIEFVFSKQELPKAIKKVLEIDKQLLVEEFIEGVEVT) participates in ATP binding. Mg(2+)-binding residues include D257, E271, and N273.

It belongs to the D-alanine--D-alanine ligase family. It depends on Mg(2+) as a cofactor. Requires Mn(2+) as cofactor.

The protein localises to the cytoplasm. It carries out the reaction 2 D-alanine + ATP = D-alanyl-D-alanine + ADP + phosphate + H(+). It participates in cell wall biogenesis; peptidoglycan biosynthesis. Its function is as follows. Cell wall formation. This Carboxydothermus hydrogenoformans (strain ATCC BAA-161 / DSM 6008 / Z-2901) protein is D-alanine--D-alanine ligase.